A 55-amino-acid polypeptide reads, in one-letter code: Large ribosomal subunit protein bL33 (55 aa).

This sequence belongs to the bacterial ribosomal protein bL33 family.

The polypeptide is Large ribosomal subunit protein bL33 (Yersinia pestis (strain Pestoides F)).